A 630-amino-acid polypeptide reads, in one-letter code: Biosynthetic arginine decarboxylase (630 aa).

Lys99 is subject to N6-(pyridoxal phosphate)lysine. Residue 281–291 (VDIGGGLGVDY) coordinates substrate.

This sequence belongs to the Orn/Lys/Arg decarboxylase class-II family. SpeA subfamily. The cofactor is Mg(2+). Pyridoxal 5'-phosphate is required as a cofactor.

The enzyme catalyses L-arginine + H(+) = agmatine + CO2. It participates in amine and polyamine biosynthesis; agmatine biosynthesis; agmatine from L-arginine: step 1/1. Its function is as follows. Catalyzes the biosynthesis of agmatine from arginine. This is Biosynthetic arginine decarboxylase from Bacteroides fragilis (strain ATCC 25285 / DSM 2151 / CCUG 4856 / JCM 11019 / LMG 10263 / NCTC 9343 / Onslow / VPI 2553 / EN-2).